A 260-amino-acid chain; its full sequence is 5-oxoprolinase subunit A 2 (260 aa).

The protein belongs to the LamB/PxpA family. Forms a complex composed of PxpA, PxpB and PxpC.

The enzyme catalyses 5-oxo-L-proline + ATP + 2 H2O = L-glutamate + ADP + phosphate + H(+). Its function is as follows. Catalyzes the cleavage of 5-oxoproline to form L-glutamate coupled to the hydrolysis of ATP to ADP and inorganic phosphate. This chain is 5-oxoprolinase subunit A 2, found in Ralstonia nicotianae (strain ATCC BAA-1114 / GMI1000) (Ralstonia solanacearum).